The primary structure comprises 517 residues: Crotonobetaine/carnitine--CoA ligase (517 aa).

The protein belongs to the ATP-dependent AMP-binding enzyme family.

The enzyme catalyses 4-(trimethylamino)butanoate + ATP + CoA = 4-(trimethylamino)butanoyl-CoA + AMP + diphosphate. It carries out the reaction crotonobetaine + ATP + CoA = crotonobetainyl-CoA + AMP + diphosphate. It catalyses the reaction (R)-carnitine + ATP + CoA = (R)-carnitinyl-CoA + AMP + diphosphate. The protein operates within amine and polyamine metabolism; carnitine metabolism. In terms of biological role, catalyzes the transfer of CoA to carnitine, generating the initial carnitinyl-CoA needed for the CaiB reaction cycle. Also has activity toward crotonobetaine and gamma-butyrobetaine. This is Crotonobetaine/carnitine--CoA ligase from Escherichia coli O17:K52:H18 (strain UMN026 / ExPEC).